Here is a 403-residue protein sequence, read N- to C-terminus: Large ribosomal subunit protein uL3 (403 aa).

A disordered region spans residues 1–38; that stretch reads MSHRKFSAPRHGSLGFLPRKRSSRHRGKVKSFPKDDSS. S13 is subject to Phosphoserine. Basic residues predominate over residues 18–31; it reads PRKRSSRHRGKVKS. A Glycyl lysine isopeptide (Lys-Gly) (interchain with G-Cter in SUMO2) cross-link involves residue K39. K136 carries the post-translational modification N6-acetyllysine. Residues K224 and K226 each participate in a glycyl lysine isopeptide (Lys-Gly) (interchain with G-Cter in SUMO2) cross-link. H245 is modified (tele-methylhistidine). An N6-acetyllysine; alternate mark is found at K286 and K294. K286 participates in a covalent cross-link: Glycyl lysine isopeptide (Lys-Gly) (interchain with G-Cter in SUMO2); alternate. A Glycyl lysine isopeptide (Lys-Gly) (interchain with G-Cter in SUMO1); alternate cross-link involves residue K294. At S304 the chain carries Phosphoserine. K366 bears the N6-acetyllysine; alternate mark. K366 is covalently cross-linked (Glycyl lysine isopeptide (Lys-Gly) (interchain with G-Cter in SUMO2); alternate). K373 carries the N6-acetyllysine modification. Glycyl lysine isopeptide (Lys-Gly) (interchain with G-Cter in SUMO2) cross-links involve residues K386, K393, and K399.

The protein belongs to the universal ribosomal protein uL3 family. Component of the large ribosomal subunit. Interacts with DHX33. Constitutively monomethylated at His-245 by METTL18. Methylation at His-245 regulates translation elongation by slowing ribosome traversal on tyrosine codons: slower elongation provides enough time for proper folding of synthesized proteins and prevents cellular aggregation of tyrosine-rich proteins It is not required for incorporation of RPL3 into ribosomes.

It localises to the nucleus. The protein localises to the nucleolus. Its subcellular location is the cytoplasm. Functionally, component of the large ribosomal subunit. The ribosome is a large ribonucleoprotein complex responsible for the synthesis of proteins in the cell. The chain is Large ribosomal subunit protein uL3 (RPL3) from Sus scrofa (Pig).